Reading from the N-terminus, the 59-residue chain is MIRKYWWLVVFAVFVFLFDTLLMQWIELLATETDKCRNMNSVNPLKLVNCDELNFQDRM.

A helical transmembrane segment spans residues 6 to 26; that stretch reads WWLVVFAVFVFLFDTLLMQWI.

The protein localises to the membrane. This is an uncharacterized protein from Escherichia coli O157:H7.